The sequence spans 325 residues: GMP reductase (325 aa).

Cys174 (thioimidate intermediate) is an active-site residue. 203–226 is an NADP(+) binding site; sequence IIADGGIRTHGDIAKSVRFGATMV.

Belongs to the IMPDH/GMPR family. GuaC type 2 subfamily.

It catalyses the reaction IMP + NH4(+) + NADP(+) = GMP + NADPH + 2 H(+). Its function is as follows. Catalyzes the irreversible NADPH-dependent deamination of GMP to IMP. It functions in the conversion of nucleobase, nucleoside and nucleotide derivatives of G to A nucleotides, and in maintaining the intracellular balance of A and G nucleotides. This is GMP reductase from Enterococcus faecalis (strain ATCC 700802 / V583).